The primary structure comprises 389 residues: Chalcone synthase 2 (389 aa).

55–62 lines the CoA pocket; it reads KFQRMCDK. Cysteine 164 (acyl-thioester intermediate) is an active-site residue. Substrate-binding positions include threonine 197 and 216–217; that span reads GD. Residue alanine 308 participates in CoA binding.

It belongs to the thiolase-like superfamily. Chalcone/stilbene synthases family. Homodimer.

It catalyses the reaction (E)-4-coumaroyl-CoA + 3 malonyl-CoA + 3 H(+) = 2',4,4',6'-tetrahydroxychalcone + 3 CO2 + 4 CoA. It functions in the pathway secondary metabolite biosynthesis; flavonoid biosynthesis. Functionally, the primary product of this enzyme is 4,2',4',6'-tetrahydroxychalcone (also termed naringenin-chalcone or chalcone) which can under specific conditions spontaneously isomerize into naringenin. The chain is Chalcone synthase 2 (CHS2) from Medicago sativa (Alfalfa).